A 556-amino-acid chain; its full sequence is Protein misato homolog 1 (556 aa).

A Phosphoserine modification is found at serine 41.

This sequence belongs to the misato family.

Its subcellular location is the mitochondrion outer membrane. It is found in the cytoplasm. In terms of biological role, involved in the regulation of mitochondrial distribution and morphology. Required for mitochondrial fusion and mitochondrial network formation. This is Protein misato homolog 1 (Msto1) from Mus musculus (Mouse).